The primary structure comprises 411 residues: MFFRYTVTLVANETDHHATVVQALLRRHIGDITPGTTQEIENALETVCGQSKEWSSTSLAAIIIAVVARSTSRLLVGPSLCRNNDYINLCIEYATEMESSAAKIRALVPFLRPLIAPYYCRRLAELRKLAHAHIAPLLAGPDSAPKEKNASSQYTAVQWLAQKLRGVPEETEERQVARIMFLNVISIFTVMMASLNVLYDILARPDVKRALLEEIAEVSGGKGDLGLGDVEFERLRRLDSCIRESQRLNPTNWIILEGQAQKDLTFSTGLCVEKGSYLSICGGAILKSNGPPLSTSSNPPPIDEFHAFRYVTPDSGISTDVSTANGNSNANSNLATAISPTNLTFGYGRMSCPGRYFAVHSIKAIVVGLLLRYDVEFEKKDGEERGRPRNVQAGNVIIPDPSVMVRVRARG.

N-linked (GlcNAc...) asparagine glycosylation is found at N12 and N149. Residues 181–203 (FLNVISIFTVMMASLNVLYDILA) traverse the membrane as a helical segment. N342 carries N-linked (GlcNAc...) asparagine glycosylation. Residue C352 coordinates heme.

Belongs to the cytochrome P450 family. The cofactor is heme.

The protein resides in the membrane. It participates in mycotoxin biosynthesis. Cytochrome P450 monooxygenase; part of the gene cluster that mediates the biosynthesis of sirodesmin PL, an epipolythiodioxopiperazine (ETP) characterized by a disulfide bridged cyclic dipeptide and that acts as a phytotoxin which is involved in the blackleg didease of canola. SirD catalyzes the O-prenylation of L-tyrosine (L-Tyr) in the presence of dimethylallyl diphosphate (DMAPP) to yield 4-O-dimethylallyl-L-Tyr, and therefore represents probably the first pathway-specific enzyme in the biosynthesis of sirodesmin PL. 4-O-dimethylallyl-L-Tyr, then undergoes condensation with L-Ser in a reaction catalyzed by the non-ribosomal peptide synthase sirP to form the diketopiperazine (DKP) backbone. Further bishydroxylation of the DKP performed by the cytochrome P450 monooxygenase sirC leads to the production of the intermediate phomamide. This step is essential to form the reactive thiol group required for toxicity of sirodesmin PL. The next steps of sirodesmin biosynthesis are not well understood yet, but some predictions could be made from intermediate compounds identification. Phomamide is converted into phomalizarine via oxidation, probably by sirT. Further oxidation, methylation (by sirM or sirN) and reduction steps convert phomalizarine to deacetyl sirodesmin. Finally, acetyltransferase sirH probably acetylates deacetyl sirodesmin to produce sirodesmin PL. This chain is Cytochrome P450 monooxygenase sirE, found in Leptosphaeria maculans (Blackleg fungus).